A 480-amino-acid polypeptide reads, in one-letter code: ATP synthase subunit beta (480 aa).

Residue 158 to 165 coordinates ATP; it reads GGAGVGKT.

The protein belongs to the ATPase alpha/beta chains family. In terms of assembly, F-type ATPases have 2 components, CF(1) - the catalytic core - and CF(0) - the membrane proton channel. CF(1) has five subunits: alpha(3), beta(3), gamma(1), delta(1), epsilon(1). CF(0) has three main subunits: a(1), b(2) and c(9-12). The alpha and beta chains form an alternating ring which encloses part of the gamma chain. CF(1) is attached to CF(0) by a central stalk formed by the gamma and epsilon chains, while a peripheral stalk is formed by the delta and b chains.

Its subcellular location is the cell inner membrane. It catalyses the reaction ATP + H2O + 4 H(+)(in) = ADP + phosphate + 5 H(+)(out). Produces ATP from ADP in the presence of a proton gradient across the membrane. The catalytic sites are hosted primarily by the beta subunits. In Acidobacterium capsulatum (strain ATCC 51196 / DSM 11244 / BCRC 80197 / JCM 7670 / NBRC 15755 / NCIMB 13165 / 161), this protein is ATP synthase subunit beta.